The sequence spans 65 residues: Kappa-scoloptoxin(04)-Ssd1a (65 aa).

The N-terminal stretch at 1 to 24 is a signal peptide; sequence MKKTCVVSVFLVLLLLKFHDLSMG. A propeptide spanning residues 25–36 is cleaved from the precursor; the sequence is EEISPLKKVAPR. 2 cysteine pairs are disulfide-bonded: Cys42–Cys53 and Cys47–Cys60.

In terms of tissue distribution, expressed by the venom gland.

It localises to the secreted. Functionally, voltage-gated potassium channel inhibitor. The protein is Kappa-scoloptoxin(04)-Ssd1a of Scolopendra dehaani (Thai centipede).